The primary structure comprises 145 residues: Putative antiporter subunit mnhG2 (145 aa).

Helical transmembrane passes span 11 to 31, 51 to 71, and 72 to 92; these read IAAV…IGIV, VLLT…FFSV, and RLLL…HLVA.

The protein belongs to the CPA3 antiporters (TC 2.A.63) subunit G family. As to quaternary structure, may form a heterooligomeric complex that consists of seven subunits: mnhA2, mnhB2, mnhC2, mnhD2, mnhE2, mnhF2 and mnhG2.

It is found in the cell membrane. This chain is Putative antiporter subunit mnhG2 (mnhG2), found in Staphylococcus aureus (strain JH9).